Here is a 673-residue protein sequence, read N- to C-terminus: MTDRFQLVSPYSPAGDQPAAIDKLVANFEAGLAKQTLLGVTGSGKTYTIANVVQQVQKPTLVMAPNKTLAAQLYGEFKSFFPHNAVEYFVSYYDYYQPEAYVPSSDTFIEKDSSINEHIEQMRLSATKTLLSRRDSLVVATVSAIYGLGAPEDYLSLRLILSIGEHIDQRQLIRHLTDLQYTRNEFELTRGAFRVRGEVLDVFPAESDTEALRIELFDGDIEQLTLFDPLTGETLRKLQRYTVYPKTHYATTRERTLSAVDTIKEELKERLEQLYSQNKLVEAQRLAQRTQFDLEMMAEVGFCNGIENYSRHLTGKAPGEPPPTLFDYLPPDALLVIDESHVTIPQIGAMYKGDRSRKETLVEFGFRLPSALDNRPLRFEEWEARSPRSIYVSATPGPYELRESAGEVTELVVRPTGLIDPVVEIRPVGTQVDDLMSEIHERIKLGDRVLVTTLTKRMAENLTEYLGEHGIRVRYLHSDIDTVERVEIIRDLRLGKFDVLVGINLLREGLDMPEVSLVAILDADKEGFLRSTGSLIQTIGRAARNLRGKAILYADKMTRSMQAAIDESDRRREKQVEYNLEHGITPESVERPISDIMEGAREDAAEKKSGKGRSKSRQVAEETPDYRAMKPAEIAGKLKSLEQKMYQHAKDLEFEAAAQIRDQIQKLKTASLA.

Residues Ala26–Arg183 form the Helicase ATP-binding domain. Position 39-46 (Gly39–Thr46) interacts with ATP. The Beta-hairpin signature appears at Tyr92–Ile115. The region spanning Gln431–Met597 is the Helicase C-terminal domain. The interval Arg601–Pro631 is disordered. Positions Gln618 to Lys630 are enriched in basic and acidic residues. In terms of domain architecture, UVR spans Ala635–Ala670.

This sequence belongs to the UvrB family. Forms a heterotetramer with UvrA during the search for lesions. Interacts with UvrC in an incision complex.

The protein resides in the cytoplasm. Its function is as follows. The UvrABC repair system catalyzes the recognition and processing of DNA lesions. A damage recognition complex composed of 2 UvrA and 2 UvrB subunits scans DNA for abnormalities. Upon binding of the UvrA(2)B(2) complex to a putative damaged site, the DNA wraps around one UvrB monomer. DNA wrap is dependent on ATP binding by UvrB and probably causes local melting of the DNA helix, facilitating insertion of UvrB beta-hairpin between the DNA strands. Then UvrB probes one DNA strand for the presence of a lesion. If a lesion is found the UvrA subunits dissociate and the UvrB-DNA preincision complex is formed. This complex is subsequently bound by UvrC and the second UvrB is released. If no lesion is found, the DNA wraps around the other UvrB subunit that will check the other stand for damage. The chain is UvrABC system protein B from Xanthomonas oryzae pv. oryzae (strain PXO99A).